Consider the following 485-residue polypeptide: Podocalyxin (485 aa).

The N-terminal stretch at 1 to 24 (MRPTLALSALLLLQLLLLSTPSLS) is a signal peptide. A disordered region spans residues 22–267 (SLSQDNGNKT…STPSSTWTSG (246 aa)). The Extracellular portion of the chain corresponds to 25–386 (QDNGNKTDTS…PPEVNEDRFS (362 aa)). Positions 26 to 57 (DNGNKTDTSDITSIDQNQDKPATNQPSNATPK) are enriched in polar residues. N-linked (GlcNAc...) asparagine glycosylation is found at Asn29 and Asn82. The span at 58-109 (SSVQPPTPTSISTSSPDPKATQSSNSSVTTTSDSTTDRTSSSTSTVPTTSNS) shows a compositional bias: low complexity. Composition is skewed to polar residues over residues 110–128 (GQTV…TALP) and 135–149 (NASS…STKL). 3 N-linked (GlcNAc...) asparagine glycosylation sites follow: Asn135, Asn144, and Asn156. Positions 150-161 (PSTPTTNSTASP) are enriched in low complexity. 3 stretches are compositionally biased toward polar residues: residues 163-176 (QPVS…TTVQ), 186-228 (DNTT…QPTG), and 235-253 (SVPT…TPVV). N-linked (GlcNAc...) asparagine glycosylation occurs at Asn187. The segment covering 254–267 (SQGPSTPSSTWTSG) has biased composition (low complexity). Residue Asn287 is glycosylated (N-linked (GlcNAc...) asparagine). A helical membrane pass occupies residues 387-407 (LPLIITIVCMASFLLLVAALY). The Cytoplasmic portion of the chain corresponds to 408 to 485 (GCCHQRISQR…DLDEEEDTHL (78 aa)). Thr445 carries the post-translational modification Phosphothreonine. Phosphoserine is present on Ser464. Thr483 is modified (phosphothreonine).

It belongs to the podocalyxin family. As to quaternary structure, monomer; when associated with the membrane raft. Oligomer; when integrated in the apical membrane. Interacts with NHERF2. Interacts (via the C-terminal PDZ-binding motif DTHL) with NHERF1 (via the PDZ domains); the interaction take place early in the secretory pathway and is necessary for its apical membrane sorting. Found in a complex with EZR, PODXL and NHERF2. Associates with the actin cytoskeleton through complex formation with EZR and NHERF2. Interacts (via the C-terminal PDZ-binding motif DTHL) with NHERF1 (via the PDZ domains); interaction is not detected in glomerular epithelium cells. Interacts (via the C-terminal PDZ-binding motif DTHL) with NHERF2 (via the PDZ 1 domain); interaction is detected in glomerular epithelium cells. Interacts with EZR. In terms of processing, N- and O-linked glycosylated. Sialoglycoprotein. As to expression, glomerular epithelium cell (podocyte) (at protein level).

It is found in the apical cell membrane. The protein resides in the cell projection. The protein localises to the microvillus. Its subcellular location is the membrane raft. It localises to the lamellipodium. It is found in the filopodium. The protein resides in the ruffle. The protein localises to the membrane. Functionally, involved in the regulation of both adhesion and cell morphology and cancer progression. Functions as an anti-adhesive molecule that maintains an open filtration pathway between neighboring foot processes in the podocyte by charge repulsion. Acts as a pro-adhesive molecule, enhancing the adherence of cells to immobilized ligands, increasing the rate of migration and cell-cell contacts in an integrin-dependent manner. Induces the formation of apical actin-dependent microvilli. Involved in the formation of a preapical plasma membrane subdomain to set up initial epithelial polarization and the apical lumen formation during renal tubulogenesis. Plays a role in cancer development and aggressiveness by inducing cell migration and invasion through its interaction with the actin-binding protein EZR. Affects EZR-dependent signaling events, leading to increased activities of the MAPK and PI3K pathways in cancer cells. The protein is Podocalyxin (Podxl) of Rattus norvegicus (Rat).